Consider the following 103-residue polypeptide: N(4)-acetylcytidine amidohydrolase (103 aa).

An ASCH domain is found at 6-101 (ITFFQRFQDD…QTQFYVIEFK (96 aa)). Lysine 21 serves as the catalytic Proton acceptor. The active-site Nucleophile is threonine 24. The active-site Proton donor is glutamate 74.

The protein belongs to the N(4)-acetylcytidine amidohydrolase family.

The catalysed reaction is N(4)-acetylcytidine + H2O = cytidine + acetate + H(+). It carries out the reaction N(4)-acetyl-2'-deoxycytidine + H2O = 2'-deoxycytidine + acetate + H(+). The enzyme catalyses N(4)-acetylcytosine + H2O = cytosine + acetate + H(+). Functionally, catalyzes the hydrolysis of N(4)-acetylcytidine (ac4C). The sequence is that of N(4)-acetylcytidine amidohydrolase (yqfB) from Escherichia coli O8 (strain IAI1).